The primary structure comprises 215 residues: Cytochrome b6 (215 aa).

Residues 32-52 form a helical membrane-spanning segment; it reads IFYCIGGITFTCFLVQVATGF. Position 35 (Cys-35) interacts with heme c. Residues His-86 and His-100 each coordinate heme b. 3 helical membrane passes run 90-110, 116-136, and 186-206; these read ASMM…TGGF, LTWV…VTGY, and LHTF…FLMI. Residues His-187 and His-202 each contribute to the heme b site.

This sequence belongs to the cytochrome b family. PetB subfamily. The 4 large subunits of the cytochrome b6-f complex are cytochrome b6, subunit IV (17 kDa polypeptide, PetD), cytochrome f and the Rieske protein, while the 4 small subunits are PetG, PetL, PetM and PetN. The complex functions as a dimer. The cofactor is heme b. Requires heme c as cofactor.

It localises to the plastid. The protein resides in the chloroplast thylakoid membrane. In terms of biological role, component of the cytochrome b6-f complex, which mediates electron transfer between photosystem II (PSII) and photosystem I (PSI), cyclic electron flow around PSI, and state transitions. This Chlorella vulgaris (Green alga) protein is Cytochrome b6.